A 356-amino-acid polypeptide reads, in one-letter code: tRNA N6-adenosine threonylcarbamoyltransferase (356 aa).

Fe cation is bound by residues histidine 115 and histidine 119. Residues 139 to 143 (LVSGG), aspartate 173, glycine 186, aspartate 190, and asparagine 291 each bind substrate. Aspartate 319 provides a ligand contact to Fe cation.

The protein belongs to the KAE1 / TsaD family. Requires Fe(2+) as cofactor.

Its subcellular location is the cytoplasm. The catalysed reaction is L-threonylcarbamoyladenylate + adenosine(37) in tRNA = N(6)-L-threonylcarbamoyladenosine(37) in tRNA + AMP + H(+). Its function is as follows. Required for the formation of a threonylcarbamoyl group on adenosine at position 37 (t(6)A37) in tRNAs that read codons beginning with adenine. Is involved in the transfer of the threonylcarbamoyl moiety of threonylcarbamoyl-AMP (TC-AMP) to the N6 group of A37, together with TsaE and TsaB. TsaD likely plays a direct catalytic role in this reaction. The polypeptide is tRNA N6-adenosine threonylcarbamoyltransferase (Arthrobacter sp. (strain FB24)).